The primary structure comprises 292 residues: General transcription factor IIE subunit 2 (292 aa).

An N-acetylmethionine modification is found at methionine 1. The segment at 17–64 (LSTPVVEKRAVPSESPSSSSSKKKKAKVEHGGSSGSKQNSDHNNGSFN) is disordered. A compositionally biased stretch (polar residues) spans 51–63 (GSKQNSDHNNGSF). Serine 62 is subject to Phosphoserine. The segment at residues 67–147 (ALSGSSGYKF…YAFKPKYNLK (81 aa)) is a DNA-binding region (TFIIE beta). An N6-acetyllysine modification is found at lysine 75. The tract at residues 245–277 (SMQESGPKKVASIQRRKKPASQKKRRFKTHNEH) is disordered. The span at 258–272 (QRRKKPASQKKRRFK) shows a compositional bias: basic residues.

Belongs to the TFIIE beta subunit family. In terms of assembly, tetramer of two alpha and two beta chains. Interacts with FACT subunit SUPT16H. Interacts with ATF7IP. Interacts with SND1. Part of TBP-based Pol II pre-initiation complex (PIC), in which Pol II core assembles with general transcription factors and other specific initiation factors including GTF2E1, GTF2E2, GTF2F1, GTF2F2, TCEA1, ERCC2, ERCC3, GTF2H2, GTF2H3, GTF2H4, GTF2H5, GTF2A1, GTF2A2, GTF2B and TBP; this large multi-subunit PIC complex mediates DNA unwinding and targets Pol II core to the transcription start site where the first phosphodiester bond forms.

The protein localises to the nucleus. Its function is as follows. Recruits TFIIH to the initiation complex and stimulates the RNA polymerase II C-terminal domain kinase and DNA-dependent ATPase activities of TFIIH. Both TFIIH and TFIIE are required for promoter clearance by RNA polymerase. The chain is General transcription factor IIE subunit 2 (Gtf2e2) from Mus musculus (Mouse).